A 150-amino-acid chain; its full sequence is Cdc42 effector protein 5 (150 aa).

Disordered regions lie at residues 1–20 (MPVMKQLGPAQPKKRLDRGA), 34–89 (LHVG…PADP), and 114–133 (SETTATKPDGDAHPRVQHPK). Residues 23–37 (ISAPLGDFRHTLHVG) form the CRIB domain. Arg-38 is subject to Omega-N-methylarginine. Pro residues-rich tracts occupy residues 55-66 (GPPPEPGAPPVV) and 74-87 (PAAPQPPVAVPSPA). The segment covering 114–127 (SETTATKPDGDAHP) has biased composition (basic and acidic residues).

The protein belongs to the BORG/CEP family. As to quaternary structure, interacts with CDC42 in a GTP-dependent manner, and with SEPT7. In terms of tissue distribution, highly expressed in the skeletal muscle.

It localises to the endomembrane system. The protein localises to the cytoplasm. It is found in the cytoskeleton. In terms of biological role, probably involved in the organization of the actin cytoskeleton. May act downstream of CDC42 to induce actin filament assembly leading to cell shape changes. Induces pseudopodia formation in fibroblasts. Inhibits MAPK8 independently of CDC42 binding. Controls septin organization and this effect is negatively regulated by CDC42. In Mus musculus (Mouse), this protein is Cdc42 effector protein 5 (Cdc42ep5).